A 261-amino-acid chain; its full sequence is Small ribosomal subunit protein eS4z (261 aa).

In terms of domain architecture, S4 RNA-binding spans 42-104; that stretch reads LPLVLIIRNR…TNENFRLLYD (63 aa).

This sequence belongs to the eukaryotic ribosomal protein eS4 family.

The protein localises to the cytoplasm. The protein is Small ribosomal subunit protein eS4z (RPS4A) of Arabidopsis thaliana (Mouse-ear cress).